The following is a 329-amino-acid chain: GTP 3',8-cyclase (329 aa).

Residues 8–234 (AFARKFYYLR…QLRQRSDGPA (227 aa)) enclose the Radical SAM core domain. Residue Arg17 participates in GTP binding. [4Fe-4S] cluster contacts are provided by Cys24 and Cys28. S-adenosyl-L-methionine is bound at residue Tyr30. Residue Cys31 coordinates [4Fe-4S] cluster. Arg68 contributes to the GTP binding site. Gly72 contributes to the S-adenosyl-L-methionine binding site. GTP is bound at residue Thr99. Ser123 contacts S-adenosyl-L-methionine. Lys160 provides a ligand contact to GTP. Met194 is a binding site for S-adenosyl-L-methionine. Cys257 and Cys260 together coordinate [4Fe-4S] cluster. 262 to 264 (RLR) is a GTP binding site. A [4Fe-4S] cluster-binding site is contributed by Cys274.

This sequence belongs to the radical SAM superfamily. MoaA family. Monomer and homodimer. The cofactor is [4Fe-4S] cluster.

It catalyses the reaction GTP + AH2 + S-adenosyl-L-methionine = (8S)-3',8-cyclo-7,8-dihydroguanosine 5'-triphosphate + 5'-deoxyadenosine + L-methionine + A + H(+). The protein operates within cofactor biosynthesis; molybdopterin biosynthesis. Functionally, catalyzes the cyclization of GTP to (8S)-3',8-cyclo-7,8-dihydroguanosine 5'-triphosphate. This is GTP 3',8-cyclase from Escherichia coli O45:K1 (strain S88 / ExPEC).